A 339-amino-acid chain; its full sequence is Glucokinase (339 aa).

ATP is bound at residue 16–21 (GDIGGT).

The protein belongs to the bacterial glucokinase family.

The protein localises to the cytoplasm. The enzyme catalyses D-glucose + ATP = D-glucose 6-phosphate + ADP + H(+). The chain is Glucokinase from Sinorhizobium medicae (strain WSM419) (Ensifer medicae).